The following is a 577-amino-acid chain: MNIQALLSEKVRQAMIAAGAPADCEPQVRQSAKVQFGDYQANGMMAVAKKLGMAPRQLAEQVLTHLDLNGIASKVEIAGPGFINIFLDPAFLADHVQQALASDRLGVATPEKQTIVVDYSAPNVAKEMHVGHLRSTIIGDAAVRTLEFLGHKVIRANHVGDWGTQFGMLIAWLEKQQQENAGEMELADLEGFYRDAKKHYDEDEEFAERARNYVVKLQSGDEYFREMWRKLVDITMTQNQITYDRLNVTLTRDDVMGESLYNPMLPGIVADLKAKGLAVESEGATVVFLDEFKNKEGEPMGVIIQKKDGGYLYTTTDIACAKYRYETLHADRVLYYIDSRQHQHLMQAWAIVRKAGYVPESVPLEHHMFGMMLGKDGKPFKTRAGGTVKLADLLDEALERARRLVAEKNPDMPADELEKLANAVGIGAVKYADLSKNRTTDYIFDWDNMLAFEGNTAPYMQYAYTRVLSVFRKAEIDEEQLAAAPVIIREDREAQLAARLLQFEETLTVVAREGTPHVMCAYLYDLAGLFSGFYEHCPILSAENEEVRNSRLKLAQLTAKTLKLGLDTLGIETVERM.

The short motif at 122-132 (PNVAKEMHVGH) is the 'HIGH' region element.

Belongs to the class-I aminoacyl-tRNA synthetase family. Monomer.

It localises to the cytoplasm. The enzyme catalyses tRNA(Arg) + L-arginine + ATP = L-arginyl-tRNA(Arg) + AMP + diphosphate. The chain is Arginine--tRNA ligase from Escherichia coli O7:K1 (strain IAI39 / ExPEC).